A 312-amino-acid polypeptide reads, in one-letter code: Glycine--tRNA ligase alpha subunit (312 aa).

Belongs to the class-II aminoacyl-tRNA synthetase family. Tetramer of two alpha and two beta subunits.

The protein localises to the cytoplasm. The enzyme catalyses tRNA(Gly) + glycine + ATP = glycyl-tRNA(Gly) + AMP + diphosphate. The chain is Glycine--tRNA ligase alpha subunit from Delftia acidovorans (strain DSM 14801 / SPH-1).